A 37-amino-acid polypeptide reads, in one-letter code: Large ribosomal subunit protein bL36 (37 aa).

This sequence belongs to the bacterial ribosomal protein bL36 family.

In Symbiobacterium thermophilum (strain DSM 24528 / JCM 14929 / IAM 14863 / T), this protein is Large ribosomal subunit protein bL36.